Here is a 292-residue protein sequence, read N- to C-terminus: 4-hydroxy-tetrahydrodipicolinate synthase (292 aa).

Threonine 45 lines the pyruvate pocket. The active-site Proton donor/acceptor is the tyrosine 133. The Schiff-base intermediate with substrate role is filled by lysine 161. Isoleucine 203 contacts pyruvate.

This sequence belongs to the DapA family. In terms of assembly, homotetramer; dimer of dimers.

Its subcellular location is the cytoplasm. The catalysed reaction is L-aspartate 4-semialdehyde + pyruvate = (2S,4S)-4-hydroxy-2,3,4,5-tetrahydrodipicolinate + H2O + H(+). The protein operates within amino-acid biosynthesis; L-lysine biosynthesis via DAP pathway; (S)-tetrahydrodipicolinate from L-aspartate: step 3/4. In terms of biological role, catalyzes the condensation of (S)-aspartate-beta-semialdehyde [(S)-ASA] and pyruvate to 4-hydroxy-tetrahydrodipicolinate (HTPA). This Vibrio cholerae serotype O1 (strain M66-2) protein is 4-hydroxy-tetrahydrodipicolinate synthase.